The following is a 205-amino-acid chain: Pyrrolidone-carboxylate peptidase (205 aa).

Catalysis depends on residues E78, C141, and H165.

This sequence belongs to the peptidase C15 family. In terms of assembly, homotetramer.

The protein resides in the cytoplasm. The enzyme catalyses Release of an N-terminal pyroglutamyl group from a polypeptide, the second amino acid generally not being Pro.. Functionally, removes 5-oxoproline from various penultimate amino acid residues except L-proline. In Thermosipho africanus (strain TCF52B), this protein is Pyrrolidone-carboxylate peptidase.